We begin with the raw amino-acid sequence, 453 residues long: Bifunctional protein GlmU (453 aa).

The segment at 1 to 225 (MNIVILAAGT…EWETLGVNSK (225 aa)) is pyrophosphorylase. UDP-N-acetyl-alpha-D-glucosamine is bound by residues 6 to 9 (LAAG), lysine 20, glutamine 71, 76 to 77 (GT), 98 to 100 (YGD), glycine 135, glutamate 150, asparagine 165, and asparagine 223. Aspartate 100 is a Mg(2+) binding site. Asparagine 223 is a binding site for Mg(2+). The segment at 226–246 (AQLAELERIHQRNVADALLVD) is linker. Residues 247–453 (GVTLADPARV…GYVRPVKKKS (207 aa)) are N-acetyltransferase. Residues arginine 329 and lysine 347 each contribute to the UDP-N-acetyl-alpha-D-glucosamine site. The active-site Proton acceptor is the histidine 359. 2 residues coordinate UDP-N-acetyl-alpha-D-glucosamine: tyrosine 362 and asparagine 373. Acetyl-CoA-binding positions include alanine 376, 382 to 383 (NY), serine 401, and alanine 419.

In the N-terminal section; belongs to the N-acetylglucosamine-1-phosphate uridyltransferase family. This sequence in the C-terminal section; belongs to the transferase hexapeptide repeat family. In terms of assembly, homotrimer. It depends on Mg(2+) as a cofactor.

The protein localises to the cytoplasm. The catalysed reaction is alpha-D-glucosamine 1-phosphate + acetyl-CoA = N-acetyl-alpha-D-glucosamine 1-phosphate + CoA + H(+). The enzyme catalyses N-acetyl-alpha-D-glucosamine 1-phosphate + UTP + H(+) = UDP-N-acetyl-alpha-D-glucosamine + diphosphate. Its pathway is nucleotide-sugar biosynthesis; UDP-N-acetyl-alpha-D-glucosamine biosynthesis; N-acetyl-alpha-D-glucosamine 1-phosphate from alpha-D-glucosamine 6-phosphate (route II): step 2/2. It functions in the pathway nucleotide-sugar biosynthesis; UDP-N-acetyl-alpha-D-glucosamine biosynthesis; UDP-N-acetyl-alpha-D-glucosamine from N-acetyl-alpha-D-glucosamine 1-phosphate: step 1/1. The protein operates within bacterial outer membrane biogenesis; LPS lipid A biosynthesis. Functionally, catalyzes the last two sequential reactions in the de novo biosynthetic pathway for UDP-N-acetylglucosamine (UDP-GlcNAc). The C-terminal domain catalyzes the transfer of acetyl group from acetyl coenzyme A to glucosamine-1-phosphate (GlcN-1-P) to produce N-acetylglucosamine-1-phosphate (GlcNAc-1-P), which is converted into UDP-GlcNAc by the transfer of uridine 5-monophosphate (from uridine 5-triphosphate), a reaction catalyzed by the N-terminal domain. In Burkholderia ambifaria (strain ATCC BAA-244 / DSM 16087 / CCUG 44356 / LMG 19182 / AMMD) (Burkholderia cepacia (strain AMMD)), this protein is Bifunctional protein GlmU.